Here is a 771-residue protein sequence, read N- to C-terminus: MAEAHQAVAFQFTVTPEGVDFQLSREVLKHIYLSVIRSWKKRLIRIKNGILRGVYPGSPTSWLVVVMATAGSSYYNVDISMGLVYYIQRWLPEGRPYRTPYTRTLFSMAIFSTGVWMMGIFFFRQTLKLLLSYHGWMFELHGQTSHLTRVWAVCVRLLSGRRPMLYSFQTSLPKLPVPSVPATVHRYLESVEHLLDDEQYYRMETLAKEFEEKTAPRLQKYLVLKSWWATNYVSDWWEEYVYLRGRNPIVVNSNYYVMDLVLVKNTDVQAARLGNAVHAMITYRRKLDREEIKPVMALGLVPMCSYQMERMFNTTRIPGKDTDVLQHLPDSRHVAVYHKGRFFKVWLYEGSRLLKPRDLEMQFQRILDDPSPPQPGEERLAALTAGGRVEWAQARQAFFSSGKNKAALDAIERAAFFVALDEESHHYDPEDEASLSLYGKALLHGNCYNRWFDKSFTLISFKNGQLGLNTEHAWADAPIIGHLWEFVLGTDSFHLGYTETGHCLGKPNPVLPPPQRLQWDIPKQCQAVIESSYQVAKALADDVELYCFQFLPFGKGLIKKCRTSPDAFVQIALQLAHFRDRGKFCLTYEASMTRMFREGRTETVRSCTRESTAFVQAMVQGRHLNEDLQRLFRKAAEKHQNMYRLAMTGAGIDRHLFCLYVVSKYLGVESPFLAEVLSEPWRLSTSQIAQFQIRMFDPNKYPKHLGAGGGFGPVADDGYGVSYMIAGENTIFFHVSSKFSSSETNAQRFGNQIRQALLDIANLFQVPKADG.

Topologically, residues 1-47 (MAEAHQAVAFQFTVTPEGVDFQLSREVLKHIYLSVIRSWKKRLIRIK) are cytoplasmic. Residues 48-73 (NGILRGVYPGSPTSWLVVVMATAGSS) form a helical membrane-spanning segment. The Mitochondrial intermembrane segment spans residues 74–101 (YYNVDISMGLVYYIQRWLPEGRPYRTPY). A helical membrane pass occupies residues 102-121 (TRTLFSMAIFSTGVWMMGIF). The Cytoplasmic portion of the chain corresponds to 122-771 (FFRQTLKLLL…NLFQVPKADG (650 aa)). The Proton acceptor role is filled by His472. 554-566 (GKGLIKKCRTSPD) lines the CoA pocket. (R)-carnitine is bound by residues Tyr588 and Thr601.

Belongs to the carnitine/choline acetyltransferase family.

The protein resides in the mitochondrion outer membrane. The catalysed reaction is (R)-carnitine + hexadecanoyl-CoA = O-hexadecanoyl-(R)-carnitine + CoA. It participates in lipid metabolism; fatty acid beta-oxidation. Its function is as follows. Catalyzes the transfer of the acyl group of long-chain fatty acid-CoA conjugates onto carnitine, an essential step for the mitochondrial uptake of long-chain fatty acids and their subsequent beta-oxidation in the mitochondrion. The protein is Carnitine O-palmitoyltransferase 1, muscle isoform (CPT1B) of Bos taurus (Bovine).